A 555-amino-acid polypeptide reads, in one-letter code: Glutamine--tRNA ligase (555 aa).

Positions 34-44 match the 'HIGH' region motif; it reads PEPNGYLHIGH. ATP is bound by residues 35–37 and 41–47; these read EPN and HIGHAKS. D67 and Y212 together coordinate L-glutamine. ATP is bound by residues T231, 261 to 262, and 269 to 271; these read RL and MSK. The 'KMSKS' region signature appears at 268 to 272; sequence IMSKR.

The protein belongs to the class-I aminoacyl-tRNA synthetase family. In terms of assembly, monomer.

Its subcellular location is the cytoplasm. It carries out the reaction tRNA(Gln) + L-glutamine + ATP = L-glutaminyl-tRNA(Gln) + AMP + diphosphate. The chain is Glutamine--tRNA ligase from Yersinia enterocolitica serotype O:8 / biotype 1B (strain NCTC 13174 / 8081).